The chain runs to 341 residues: Phosphate acyltransferase (341 aa).

It belongs to the PlsX family. In terms of assembly, homodimer. Probably interacts with PlsY.

It is found in the cytoplasm. The enzyme catalyses a fatty acyl-[ACP] + phosphate = an acyl phosphate + holo-[ACP]. Its pathway is lipid metabolism; phospholipid metabolism. Functionally, catalyzes the reversible formation of acyl-phosphate (acyl-PO(4)) from acyl-[acyl-carrier-protein] (acyl-ACP). This enzyme utilizes acyl-ACP as fatty acyl donor, but not acyl-CoA. The sequence is that of Phosphate acyltransferase from Vibrio parahaemolyticus serotype O3:K6 (strain RIMD 2210633).